Reading from the N-terminus, the 38-residue chain is Allatostatin-C (38 aa).

Positions 1-19 (MRRALDGPGSSSLDTRQAD) are excised as a propeptide. Position 22 is a pyrrolidone carboxylic acid; partial (Gln22).

The protein belongs to the allatostatin family. As to expression, in its non-pyroglutamate form, expressed in antennal lobe (AL), corpora cardiaca (CC), corpora allata (CA) and gnathal ganglion (GNG) with expression in AL detected in most animals and expression in CC, CA and GNG detected in few animals (at protein level). In its pyroglutamate form, expressed in antennal lobe (AL), corpora cardiaca (CC) and corpora allata (CA) with expression detected in few animals (at protein level). Not expressed in GNG (protein level).

The protein localises to the secreted. Its function is as follows. Strongly inhibits juvenile hormone biosynthesis. This is Allatostatin-C from Agrotis ipsilon (Black cutworm moth).